Consider the following 395-residue polypeptide: Altered inheritance of mitochondria protein 39, mitochondrial (395 aa).

A helical membrane pass occupies residues Ile161–Leu181.

Belongs to the AIM39 family.

It localises to the mitochondrion membrane. The polypeptide is Altered inheritance of mitochondria protein 39, mitochondrial (AIM39) (Saccharomyces cerevisiae (strain YJM789) (Baker's yeast)).